Reading from the N-terminus, the 226-residue chain is Fibronectin type III domain-containing protein 10 (226 aa).

A signal peptide spans 1 to 20 (MRAPPLLLLLAACAPPPCAA). Residues 21–182 (AAPTPPGWEP…FTAEPAGMQD (162 aa)) lie on the Extracellular side of the membrane. Positions 74-166 (PAGRSLRASV…PAAAAPETPE (93 aa)) constitute a Fibronectin type-III domain. Residues asparagine 86 and asparagine 109 are each glycosylated (N-linked (GlcNAc...) asparagine). Residues 183-203 (IVVAMTAVGGSICVMLVVICL) traverse the membrane as a helical segment. The Cytoplasmic segment spans residues 204-226 (LVAYITENLMRPALARPGLRRHP).

The protein localises to the membrane. The sequence is that of Fibronectin type III domain-containing protein 10 (FNDC10) from Homo sapiens (Human).